Consider the following 83-residue polypeptide: MKTLLLTLVVVTMVCLDLGYTRRCFNQQSSQPKTTKSCPPGENSCYNKQWRDHRGSITERGCGCPKVKPGIKLRCCESEDCNN.

Residues 1–21 (MKTLLLTLVVVTMVCLDLGYT) form the signal peptide. Cystine bridges form between cysteine 24–cysteine 45, cysteine 38–cysteine 62, cysteine 64–cysteine 75, and cysteine 76–cysteine 81.

The protein belongs to the three-finger toxin family. Short-chain subfamily. Type I alpha-neurotoxin sub-subfamily. In terms of tissue distribution, expressed by the venom gland.

The protein localises to the secreted. Binds to muscle nicotinic acetylcholine receptor (nAChR) and inhibit acetylcholine from binding to the receptor, thereby impairing neuromuscular transmission. This is Short neurotoxin D from Laticauda colubrina (Yellow-lipped sea krait).